The chain runs to 48 residues: DNA gyrase inhibitor YacG (48 aa).

Zn(2+)-binding residues include Cys9, Cys12, Cys28, and Cys32.

It belongs to the DNA gyrase inhibitor YacG family. In terms of assembly, interacts with GyrB. It depends on Zn(2+) as a cofactor.

Inhibits all the catalytic activities of DNA gyrase by preventing its interaction with DNA. Acts by binding directly to the C-terminal domain of GyrB, which probably disrupts DNA binding by the gyrase. This is DNA gyrase inhibitor YacG from Wigglesworthia glossinidia brevipalpis.